Here is a 428-residue protein sequence, read N- to C-terminus: Light-independent protochlorophyllide reductase subunit N (428 aa).

Residues cysteine 31, cysteine 56, and cysteine 117 each contribute to the [4Fe-4S] cluster site.

This sequence belongs to the BchN/ChlN family. Protochlorophyllide reductase is composed of three subunits; BchL, BchN and BchB. Forms a heterotetramer of two BchB and two BchN subunits. It depends on [4Fe-4S] cluster as a cofactor.

The enzyme catalyses chlorophyllide a + oxidized 2[4Fe-4S]-[ferredoxin] + 2 ADP + 2 phosphate = protochlorophyllide a + reduced 2[4Fe-4S]-[ferredoxin] + 2 ATP + 2 H2O. It participates in porphyrin-containing compound metabolism; bacteriochlorophyll biosynthesis (light-independent). In terms of biological role, component of the dark-operative protochlorophyllide reductase (DPOR) that uses Mg-ATP and reduced ferredoxin to reduce ring D of protochlorophyllide (Pchlide) to form chlorophyllide a (Chlide). This reaction is light-independent. The NB-protein (BchN-BchB) is the catalytic component of the complex. The chain is Light-independent protochlorophyllide reductase subunit N from Rhodopseudomonas palustris (strain HaA2).